A 213-amino-acid polypeptide reads, in one-letter code: Uridine kinase (213 aa).

Gly-15–Ser-22 serves as a coordination point for ATP.

This sequence belongs to the uridine kinase family.

It is found in the cytoplasm. The enzyme catalyses uridine + ATP = UMP + ADP + H(+). It catalyses the reaction cytidine + ATP = CMP + ADP + H(+). It functions in the pathway pyrimidine metabolism; CTP biosynthesis via salvage pathway; CTP from cytidine: step 1/3. Its pathway is pyrimidine metabolism; UMP biosynthesis via salvage pathway; UMP from uridine: step 1/1. The chain is Uridine kinase from Cronobacter sakazakii (strain ATCC BAA-894) (Enterobacter sakazakii).